A 621-amino-acid polypeptide reads, in one-letter code: Chaperone protein HtpG (621 aa).

Residues 1–328 are a; substrate-binding; it reads MTQEKKKFDA…SEDLPLNISR (328 aa). Residues 329–544 are b; sequence ESLQHNNVLE…DTAMDIRMER (216 aa). Residues 545–621 are c; the sequence is FLIEQKQIAS…LNDILQKAIL (77 aa).

Belongs to the heat shock protein 90 family. In terms of assembly, homodimer.

It is found in the cytoplasm. Molecular chaperone. Has ATPase activity. The protein is Chaperone protein HtpG of Rickettsia typhi (strain ATCC VR-144 / Wilmington).